A 230-amino-acid polypeptide reads, in one-letter code: Uracil-DNA glycosylase (230 aa).

Aspartate 70 (proton acceptor) is an active-site residue.

It belongs to the uracil-DNA glycosylase (UDG) superfamily. UNG family.

The protein localises to the cytoplasm. The catalysed reaction is Hydrolyzes single-stranded DNA or mismatched double-stranded DNA and polynucleotides, releasing free uracil.. Functionally, excises uracil residues from the DNA which can arise as a result of misincorporation of dUMP residues by DNA polymerase or due to deamination of cytosine. This Pseudomonas putida (strain W619) protein is Uracil-DNA glycosylase.